A 105-amino-acid polypeptide reads, in one-letter code: Large ribosomal subunit protein uL24 (105 aa).

It belongs to the universal ribosomal protein uL24 family. As to quaternary structure, part of the 50S ribosomal subunit.

In terms of biological role, one of two assembly initiator proteins, it binds directly to the 5'-end of the 23S rRNA, where it nucleates assembly of the 50S subunit. Its function is as follows. One of the proteins that surrounds the polypeptide exit tunnel on the outside of the subunit. This chain is Large ribosomal subunit protein uL24, found in Clostridium botulinum (strain ATCC 19397 / Type A).